The primary structure comprises 312 residues: Borealin-2 (312 aa).

Residues 1–10 (MPPRKAPAKR) show a composition bias toward basic residues. Residues 1-26 (MPPRKAPAKRRSTDSGVERDRGALSQ) are disordered. The segment covering 11-26 (RSTDSGVERDRGALSQ) has biased composition (basic and acidic residues).

It belongs to the borealin family. Component of the CPC complex.

It localises to the nucleus. The protein resides in the chromosome. Its subcellular location is the centromere. Its function is as follows. Component of the chromosomal passenger complex (CPC), a complex that acts as a key regulator of mitosis. The CPC complex has essential functions at the centromere in ensuring correct chromosome alignment and segregation and is required for chromatin-induced microtubule stabilization and spindle assembly. In Gallus gallus (Chicken), this protein is Borealin-2.